Reading from the N-terminus, the 469-residue chain is Probable indole-3-acetic acid-amido synthetase GH3.13 (469 aa).

The interval 1–26 (MTSTSSENAPDHDHDHDASSPAPATA) is disordered. A compositionally biased stretch (basic and acidic residues) spans 9-18 (APDHDHDHDA).

Belongs to the IAA-amido conjugating enzyme family.

Functionally, may catalyze the synthesis of indole-3-acetic acid (IAA)-amino acid conjugates, providing a mechanism for the plant to cope with the presence of excess auxin. The protein is Probable indole-3-acetic acid-amido synthetase GH3.13 (GH3.13) of Oryza sativa subsp. japonica (Rice).